The sequence spans 137 residues: Envelope glycoprotein L (137 aa).

An N-terminal signal peptide occupies residues 1–22 (MRAVGVFLAICLVTIFVLPTWG). The tract at residues 23-128 (NWAYPCCHVT…SVEDLFGANL (106 aa)) is interaction with gH. 2 cysteine pairs are disulfide-bonded: cysteine 28–cysteine 56 and cysteine 29–cysteine 79.

This sequence belongs to the herpesviridae glycoprotein L family. In terms of assembly, interacts with glycoprotein H (gH); this interaction is necessary for the correct processing and cell surface expression of gH. The heterodimer gH/gL seems to interact with gB trimers during fusion. The heterodimer gH/gL interacts with host EPHA2 to facilitate virus internalization and fusion.

The protein resides in the virion membrane. Its subcellular location is the host cell membrane. It is found in the host Golgi apparatus. The protein localises to the host trans-Golgi network. Its function is as follows. The heterodimer glycoprotein H-glycoprotein L is required for the fusion of viral and plasma membranes leading to virus entry into the host cell. Acts as a functional inhibitor of gH and maintains gH in an inhibited form. Upon binding to host integrins, gL dissociates from gH leading to activation of the viral fusion glycoproteins gB and gH. Fusion of EBV with B-lymphocytes requires the additional receptor-binding protein gp42, which forms a complex with gH/gL. The heterodimer gH/gL targets also host EPHA2 to promote viral entry. In Homo sapiens (Human), this protein is Envelope glycoprotein L.